A 253-amino-acid chain; its full sequence is Adenosylcobinamide-GDP ribazoletransferase (253 aa).

7 helical membrane passes run 33–53 (ISPLIIGISLALIESAVYVLL), 56–76 (ILEALAGIVLLGVVELLRGFN), 106–126 (IGSGGIGLLLVYLSIQIVALL), 132–152 (FYTIFYLISSNVLSMTIGLYI), 178–198 (VLLFELIPFISLYNIIVFLVF), 209–229 (LGGSSGDIAGASITLSFPLFL), and 233–253 (EITNLNYSLLSILCYLFLYLH).

This sequence belongs to the CobS family. The cofactor is Mg(2+).

The protein localises to the cell membrane. The enzyme catalyses alpha-ribazole + adenosylcob(III)inamide-GDP = adenosylcob(III)alamin + GMP + H(+). The catalysed reaction is alpha-ribazole 5'-phosphate + adenosylcob(III)inamide-GDP = adenosylcob(III)alamin 5'-phosphate + GMP + H(+). It participates in cofactor biosynthesis; adenosylcobalamin biosynthesis; adenosylcobalamin from cob(II)yrinate a,c-diamide: step 7/7. Its function is as follows. Joins adenosylcobinamide-GDP and alpha-ribazole to generate adenosylcobalamin (Ado-cobalamin). Also synthesizes adenosylcobalamin 5'-phosphate from adenosylcobinamide-GDP and alpha-ribazole 5'-phosphate. This is Adenosylcobinamide-GDP ribazoletransferase from Saccharolobus islandicus (strain M.16.27) (Sulfolobus islandicus).